Here is a 150-residue protein sequence, read N- to C-terminus: D-aminoacyl-tRNA deacylase (150 aa).

The Gly-cisPro motif, important for rejection of L-amino acids motif lies at 138–139 (GP).

Belongs to the DTD family. Homodimer.

It is found in the cytoplasm. It catalyses the reaction glycyl-tRNA(Ala) + H2O = tRNA(Ala) + glycine + H(+). It carries out the reaction a D-aminoacyl-tRNA + H2O = a tRNA + a D-alpha-amino acid + H(+). Its function is as follows. An aminoacyl-tRNA editing enzyme that deacylates mischarged D-aminoacyl-tRNAs. Also deacylates mischarged glycyl-tRNA(Ala), protecting cells against glycine mischarging by AlaRS. Acts via tRNA-based rather than protein-based catalysis; rejects L-amino acids rather than detecting D-amino acids in the active site. By recycling D-aminoacyl-tRNA to D-amino acids and free tRNA molecules, this enzyme counteracts the toxicity associated with the formation of D-aminoacyl-tRNA entities in vivo and helps enforce protein L-homochirality. The protein is D-aminoacyl-tRNA deacylase of Chromobacterium violaceum (strain ATCC 12472 / DSM 30191 / JCM 1249 / CCUG 213 / NBRC 12614 / NCIMB 9131 / NCTC 9757 / MK).